The primary structure comprises 545 residues: ATP synthase F(1) complex subunit alpha, mitochondrial (545 aa).

ATP-binding residues include glutamine 216, glycine 218, lysine 219, threonine 220, and serine 221. A Mg(2+)-binding site is contributed by threonine 220. Aspartate 304 is a binding site for Mg(2+). Positions 465 and 467 each coordinate ATP.

The protein belongs to the ATPase alpha/beta chains family. Homotrimer. Component of the ATP synthase complex composed at least of ATP5F1A/subunit alpha, ATP5F1B/subunit beta, ATP5MC1/subunit c (homooctomer), MT-ATP6/subunit a, MT-ATP8/subunit 8, ATP5ME/subunit e, ATP5MF/subunit f, ATP5MG/subunit g, ATP5MK/subunit k, ATP5MJ/subunit j, ATP5F1C/subunit gamma, ATP5F1D/subunit delta, ATP5F1E/subunit epsilon, ATP5PF/subunit F6, ATP5PB/subunit b, ATP5PD/subunit d, ATP5PO/subunit OSCP. ATP synthase complex consists of a soluble F(1) head domain (subunits alpha(3) and beta(3)) - the catalytic core - and a membrane F(0) domain - the membrane proton channel (subunits c, a, 8, e, f, g, k and j). These two domains are linked by a central stalk (subunits gamma, delta, and epsilon) rotating inside the F1 region and a stationary peripheral stalk (subunits F6, b, d, and OSCP).

It is found in the mitochondrion inner membrane. In terms of biological role, subunit alpha, of the mitochondrial membrane ATP synthase complex (F(1)F(0) ATP synthase or Complex V) that produces ATP from ADP in the presence of a proton gradient across the membrane which is generated by electron transport complexes of the respiratory chain. ATP synthase complex consist of a soluble F(1) head domain - the catalytic core - and a membrane F(1) domain - the membrane proton channel. These two domains are linked by a central stalk rotating inside the F(1) region and a stationary peripheral stalk. During catalysis, ATP synthesis in the catalytic domain of F(1) is coupled via a rotary mechanism of the central stalk subunits to proton translocation. In vivo, can only synthesize ATP although its ATP hydrolase activity can be activated artificially in vitro. With the catalytic subunit beta (ATP5F1B), forms the catalytic core in the F(1) domain. Subunit alpha does not bear the catalytic high-affinity ATP-binding sites. This Xenopus laevis (African clawed frog) protein is ATP synthase F(1) complex subunit alpha, mitochondrial.